A 227-amino-acid chain; its full sequence is Myogenin (227 aa).

The 52-residue stretch at 82–133 (DRRRAATLREKRRLKKVNEAFEALKRSTLLNPNQRLPKVEILRSAIQYIERL) folds into the bHLH domain. The disordered stretch occupies residues 147–196 (QRELRYRPAAPQPAAPSECGSGSSSCSPEWSTQLEFGTNPADHLLSDDQA). Over residues 161–175 (APSECGSGSSSCSPE) the composition is skewed to low complexity.

In terms of assembly, homodimer and heterodimer. Efficient DNA binding requires dimerization with another bHLH protein.

Its subcellular location is the nucleus. Its function is as follows. Acts as a transcriptional activator that promotes transcription of muscle-specific target genes and plays a role in muscle differentiation. Induces fibroblasts to differentiate into myoblasts. Probable sequence specific DNA-binding protein. This chain is Myogenin (MYOG), found in Gallus gallus (Chicken).